We begin with the raw amino-acid sequence, 290 residues long: Syntaxin-2 (290 aa).

Over 1–266 the chain is Cytoplasmic; it reads MRDRLPDLTA…KYQSKARRKK (266 aa). Phosphoserine is present on serine 14. A coiled-coil region spans residues 69–106; it reads EGKIKEELEDLNKEIKKTANRIRGKLKAIEQSCDQDEN. In terms of domain architecture, t-SNARE coiled-coil homology spans 193–255; sequence LNEIESRHKD…EHAKEETKKA (63 aa). The chain crosses the membrane as a helical; Anchor for type IV membrane protein span at residues 267-290; that stretch reads WIIAAVVVAVIAVLALIIGLTVGK.

It belongs to the syntaxin family. As to quaternary structure, interacts with SYT6 and SYT8; the interaction is Ca(2+)-dependent. As to expression, heart, spleen, liver, and testis.

The protein localises to the membrane. Functionally, essential for epithelial morphogenesis. May mediate Ca(2+)-regulation of exocytosis acrosomal reaction in sperm. This chain is Syntaxin-2 (Stx2), found in Rattus norvegicus (Rat).